Reading from the N-terminus, the 406-residue chain is Cysteine desulfurase (406 aa).

The residue at position 226 (K226) is an N6-(pyridoxal phosphate)lysine. Catalysis depends on C364, which acts as the Cysteine persulfide intermediate.

It belongs to the class-V pyridoxal-phosphate-dependent aminotransferase family. Csd subfamily. As to quaternary structure, homodimer. Interacts with SufE and the SufBCD complex composed of SufB, SufC and SufD. The interaction with SufE is required to mediate the direct transfer of the sulfur atom from the S-sulfanylcysteine. Pyridoxal 5'-phosphate is required as a cofactor.

It is found in the cytoplasm. The enzyme catalyses (sulfur carrier)-H + L-cysteine = (sulfur carrier)-SH + L-alanine. It carries out the reaction L-selenocysteine + AH2 = hydrogenselenide + L-alanine + A + H(+). Its pathway is cofactor biosynthesis; iron-sulfur cluster biosynthesis. Cysteine desulfurases mobilize the sulfur from L-cysteine to yield L-alanine, an essential step in sulfur metabolism for biosynthesis of a variety of sulfur-containing biomolecules. Component of the suf operon, which is activated and required under specific conditions such as oxidative stress and iron limitation. Acts as a potent selenocysteine lyase in vitro, that mobilizes selenium from L-selenocysteine. Selenocysteine lyase activity is however unsure in vivo. The sequence is that of Cysteine desulfurase from Salmonella choleraesuis (strain SC-B67).